We begin with the raw amino-acid sequence, 266 residues long: Gasdermin bGSDM (266 aa).

Residue cysteine 4 is the site of S-palmitoyl cysteine attachment. 4 beta stranded membrane-spanning segments follow: residues 69–85 (INGQKTENLSFSIGINI), 97–114 (AGIEAQYNQARKVRFEFS), 163–180 (EFTVAAEKSGGGSIQLDV), and 189–205 (GKLKVEASVSSQSTVTY). Positions 238–266 (AMALDAAGGVMPSDSALLDEGGLLDLEGF) are C-terminal region.

This sequence belongs to the bacterial gasdermin family. Monomer in solution. As to quaternary structure, homooligomer; forms homooligomeric ring-shaped pores when inserted in membranes with 48-54 subunits per ring. In terms of processing, palmitoylation helps stabilize the inactive state; may self palmitoylate. Palmitoylation plays a significant role in pore formation.

The protein localises to the cytoplasm. It is found in the cell inner membrane. Its activity is regulated as follows. The full-length protein before cleavage is inactive: intramolecular interactions between the N-terminal domain and the C-terminal region as well as the lipid modification, mediate autoinhibition. The pyroptosis-like-inducing activity is carried by the released N-terminal domain (Gasdermin bGSDM, N-terminus). Precursor of a pore-forming protein involved in defense against bacteriophages. Expression of bGSDM and the neighboring protease gene (Ga0334635_1659) is toxic in E.coli. Cleavage of this precursor by its dedicated protease releases the active moiety (gasdermin bGSDM, N-terminus) which inserts into membranes, forming pores and triggering cell death. Functionally, pore-forming protein that causes membrane permeabilization, probably via a pyroptosis-like activity. Makes ring-like pores with an interior pore diameter of 200-300 Angstroms, when integrated in liposomes. This chain is Gasdermin bGSDM, found in Vitiosangium sp. (strain GDMCC 1.1324).